Here is an 89-residue protein sequence, read N- to C-terminus: Small ribosomal subunit protein uS15 (89 aa).

This sequence belongs to the universal ribosomal protein uS15 family. Part of the 30S ribosomal subunit. Forms a bridge to the 50S subunit in the 70S ribosome, contacting the 23S rRNA.

Functionally, one of the primary rRNA binding proteins, it binds directly to 16S rRNA where it helps nucleate assembly of the platform of the 30S subunit by binding and bridging several RNA helices of the 16S rRNA. Its function is as follows. Forms an intersubunit bridge (bridge B4) with the 23S rRNA of the 50S subunit in the ribosome. The chain is Small ribosomal subunit protein uS15 from Methylorubrum extorquens (strain CM4 / NCIMB 13688) (Methylobacterium extorquens).